We begin with the raw amino-acid sequence, 415 residues long: Fructose-like permease IIC component (415 aa).

Over 1–46 the chain is Cytoplasmic; it reads MAIKKRSATVVPGASGAAAAVKNLQASKSSFWGELPQHVMSGISRM. The 381-residue stretch at 35 to 415 folds into the PTS EIIC type-2 domain; that stretch reads LPQHVMSGIS…RKGKLLIDSL (381 aa). The chain crosses the membrane as a helical span at residues 47–67; sequence VPTLIMGGVILAFSQLIAYSW. Residues 68-101 lie on the Periplasmic side of the membrane; it reads LKIPAEIGIMDALNSGKFSGFDLSLLKFAWLSQS. Residues 102-122 traverse the membrane as a helical segment; sequence FGGVLFGFAIPMFAAFVANSI. Residues 123–126 are Cytoplasmic-facing; that stretch reads GGKL. Residues 127–147 form a helical membrane-spanning segment; that stretch reads AFPAGFIGGLMSTQPTQLLNF. The Periplasmic portion of the chain corresponds to 148-157; the sequence is DPSTMQWATS. Residues 158-178 traverse the membrane as a helical segment; the sequence is SPVPSTFIGALIISIVAGYLV. Residues 179 to 197 are Cytoplasmic-facing; it reads KWMNQKIQLPDFLLAFKTT. A helical membrane pass occupies residues 198–218; that stretch reads FLLPILSAIFVMLAMYYVITP. Residues 219–237 lie on the Periplasmic side of the membrane; it reads FGGWINGGIRTVLTAAGEK. Residues 238–258 form a helical membrane-spanning segment; sequence GALMYAMGIAAATAIDLGGPI. Residues 259-276 lie on the Cytoplasmic side of the membrane; sequence NKAAGFVAFSFTTDHVLP. The chain crosses the membrane as a helical span at residues 277–297; that stretch reads VTARSIAIVIPPIGLGLATII. Over 298-318 the chain is Periplasmic; the sequence is DRRLTGKRLFNAQLYPQGKTA. The chain crosses the membrane as a helical span at residues 319–339; sequence MFLAFMGISEGAIPFALESPI. Residues 340-341 lie on the Cytoplasmic side of the membrane; sequence TA. A helical transmembrane segment spans residues 342 to 362; the sequence is IPSYMVGAIVGSTAAVWLGAV. The Periplasmic portion of the chain corresponds to 363–378; it reads QWFPESAIWAWPLVTN. The chain crosses the membrane as a helical span at residues 379 to 399; it reads LGVYMAGIALGAIITALMVVF. At 400–415 the chain is on the cytoplasmic side; it reads LRLMMFRKGKLLIDSL.

Its subcellular location is the cell inner membrane. Its function is as follows. The phosphoenolpyruvate-dependent sugar phosphotransferase system (PTS), a major carbohydrate active -transport system, catalyzes the phosphorylation of incoming sugar substrates concomitant with their translocation across the cell membrane. This chain is Fructose-like permease IIC component (fryC), found in Shigella flexneri.